A 256-amino-acid polypeptide reads, in one-letter code: Small ribosomal subunit protein uS3 (256 aa).

The KH type-2 domain occupies 39-121; it reads IRTYLTKQLS…TIRINVVEVT (83 aa). Residues 227-256 form a disordered region; that stretch reads RHEQKFPLQQPKRRQQRRRPTFEDRSAQEA. Positions 246–256 are enriched in basic and acidic residues; sequence PTFEDRSAQEA.

Belongs to the universal ribosomal protein uS3 family. In terms of assembly, part of the 30S ribosomal subunit. Forms a tight complex with proteins S10 and S14.

Functionally, binds the lower part of the 30S subunit head. Binds mRNA in the 70S ribosome, positioning it for translation. This is Small ribosomal subunit protein uS3 from Synechococcus sp. (strain JA-2-3B'a(2-13)) (Cyanobacteria bacterium Yellowstone B-Prime).